The following is a 238-amino-acid chain: AGEGNGRGPYVQADLAYAYEHITHDYPKPTDPSKGKLSTVSDYFRNIRTHSIHPRVSVGYDFGGWRIAADYARYRKWNDSKYSVSIKNLQRRTSNGNRRDRKTENQENGSFHAVSSLGLSAVYDFKLNDKFKPYIGARVAYGHVRHSIDSTKKITQFLTTAGARGTVSTVHPPYKSTQDAHHQSDSIRRVGLGVIAGVGFGITPKLTLDAGYRYHNWGRLENTRFKTHEASLGVRYRF.

A1 is a signal peptide. The disordered stretch occupies residues N88 to G109.

It belongs to the opacity porin family.

The protein resides in the cell outer membrane. Functionally, implicated in a number of adherence functions. OPA proteins are implicated in pathogenesis and are subject to phase variation. This chain is Opacity protein opA68, found in Neisseria gonorrhoeae.